Here is a 176-residue protein sequence, read N- to C-terminus: Isopentenyl-diphosphate Delta-isomerase (176 aa).

Mn(2+) contacts are provided by His22 and His28. The 135-residue stretch at 26–160 (LRHKAVSVFV…PDRYTPWLRI (135 aa)) folds into the Nudix hydrolase domain. Cys62 is an active-site residue. His64 serves as a coordination point for Mn(2+). Glu82 is a Mg(2+) binding site. Residues Glu108 and Glu110 each coordinate Mn(2+). Glu110 is a catalytic residue.

The protein belongs to the IPP isomerase type 1 family. The cofactor is Mg(2+). Mn(2+) is required as a cofactor.

The protein localises to the cytoplasm. The enzyme catalyses isopentenyl diphosphate = dimethylallyl diphosphate. The protein operates within isoprenoid biosynthesis; dimethylallyl diphosphate biosynthesis; dimethylallyl diphosphate from isopentenyl diphosphate: step 1/1. It functions in the pathway porphyrin-containing compound metabolism; chlorophyll biosynthesis. Catalyzes the 1,3-allylic rearrangement of the homoallylic substrate isopentenyl (IPP) to its highly electrophilic allylic isomer, dimethylallyl diphosphate (DMAPP). This Roseobacter denitrificans (strain ATCC 33942 / OCh 114) (Erythrobacter sp. (strain OCh 114)) protein is Isopentenyl-diphosphate Delta-isomerase.